The chain runs to 103 residues: Large ribosomal subunit protein bL21 (103 aa).

It belongs to the bacterial ribosomal protein bL21 family. In terms of assembly, part of the 50S ribosomal subunit. Contacts protein L20.

Its function is as follows. This protein binds to 23S rRNA in the presence of protein L20. This chain is Large ribosomal subunit protein bL21, found in Desulforudis audaxviator (strain MP104C).